A 181-amino-acid chain; its full sequence is Large ribosomal subunit protein uL6 (181 aa).

This sequence belongs to the universal ribosomal protein uL6 family. Part of the 50S ribosomal subunit.

This protein binds to the 23S rRNA, and is important in its secondary structure. It is located near the subunit interface in the base of the L7/L12 stalk, and near the tRNA binding site of the peptidyltransferase center. The sequence is that of Large ribosomal subunit protein uL6 from Vesicomyosocius okutanii subsp. Calyptogena okutanii (strain HA).